The following is a 193-amino-acid chain: Ion-translocating oxidoreductase complex subunit B (193 aa).

The interval methionine 1–alanine 26 is hydrophobic. The 59-residue stretch at glutamate 32–valine 90 folds into the 4Fe-4S domain. The [4Fe-4S] cluster site is built by cysteine 49, cysteine 52, cysteine 57, cysteine 73, cysteine 114, cysteine 117, cysteine 120, cysteine 124, cysteine 144, cysteine 147, cysteine 150, and cysteine 154. 2 consecutive 4Fe-4S ferredoxin-type domains span residues lysine 105 to lysine 134 and methionine 136 to valine 164.

It belongs to the 4Fe4S bacterial-type ferredoxin family. RnfB subfamily. As to quaternary structure, the complex is composed of six subunits: RnfA, RnfB, RnfC, RnfD, RnfE and RnfG. [4Fe-4S] cluster is required as a cofactor.

Its subcellular location is the cell inner membrane. Part of a membrane-bound complex that couples electron transfer with translocation of ions across the membrane. This Shewanella sp. (strain MR-7) protein is Ion-translocating oxidoreductase complex subunit B.